The following is a 96-amino-acid chain: Growth-regulated alpha protein (96 aa).

The N-terminal stretch at 1 to 24 (MVSATRSLLCAALPVLATSRQATG) is a signal peptide. 2 disulfides stabilise this stretch: Cys-33/Cys-59 and Cys-35/Cys-75.

It belongs to the intercrine alpha (chemokine CxC) family. In terms of assembly, monomer and homodimer. At least expressed in the lung and trachea.

The protein resides in the secreted. Its function is as follows. Has chemotactic activity for neutrophils. Contributes to neutrophil activation during inflammation. This chain is Growth-regulated alpha protein (Cxcl1), found in Rattus norvegicus (Rat).